The following is a 205-amino-acid chain: Small ribosomal subunit protein mS26 (205 aa).

The transit peptide at 1-26 (MLRALSTLGARPLGRPPAQFLLLARG) directs the protein to the mitochondrion.

Belongs to the mitochondrion-specific ribosomal protein mS26 family. As to quaternary structure, component of the mitochondrial ribosome small subunit (28S) which comprises a 12S rRNA and about 30 distinct proteins.

It localises to the mitochondrion. This chain is Small ribosomal subunit protein mS26 (MRPS26), found in Bos taurus (Bovine).